A 185-amino-acid polypeptide reads, in one-letter code: Elongation factor P (185 aa).

Belongs to the elongation factor P family.

Its subcellular location is the cytoplasm. It functions in the pathway protein biosynthesis; polypeptide chain elongation. Involved in peptide bond synthesis. Stimulates efficient translation and peptide-bond synthesis on native or reconstituted 70S ribosomes in vitro. Probably functions indirectly by altering the affinity of the ribosome for aminoacyl-tRNA, thus increasing their reactivity as acceptors for peptidyl transferase. This is Elongation factor P from Lysinibacillus sphaericus (strain C3-41).